The sequence spans 170 residues: Large ribosomal subunit protein bL17 (170 aa).

Over residues 134 to 144 (ASAKAAQAQEK) the composition is skewed to low complexity. The segment at 134–170 (ASAKAAQAQEKPAQEEEVEATSDEVAYTSEPDKAAEH) is disordered.

This sequence belongs to the bacterial ribosomal protein bL17 family. In terms of assembly, part of the 50S ribosomal subunit. Contacts protein L32.

The polypeptide is Large ribosomal subunit protein bL17 (Mycobacterium leprae (strain Br4923)).